The chain runs to 332 residues: Hdr-like menaquinol oxidoreductase cytochrome b-like subunit (332 aa).

Transmembrane regions (helical) follow at residues 3–23 (GVIF…IGVI), 97–117 (DARW…LVLI), 143–163 (VFIP…FLLW), 177–197 (LPSD…GNVM), and 230–250 (IEPI…YFPF).

In terms of assembly, consists of five subunits: an integral membrane subunit, a cytochrome b-like subunit, a cytochrome c subunit and two iron-sulfur subunits.

The protein resides in the cell membrane. In terms of biological role, has menaquinol-oxidizing activity. HmeC and HmeD subunits may together mediate electron transfer from menaquinol to an unidentified electron acceptor on the cytoplasmic side of the membrane. The polypeptide is Hdr-like menaquinol oxidoreductase cytochrome b-like subunit (hmeC) (Archaeoglobus fulgidus (strain ATCC 49558 / DSM 4304 / JCM 9628 / NBRC 100126 / VC-16)).